We begin with the raw amino-acid sequence, 261 residues long: tRNA pseudouridine synthase A (261 aa).

D51 functions as the Nucleophile in the catalytic mechanism. Residue Y109 coordinates substrate.

This sequence belongs to the tRNA pseudouridine synthase TruA family. Homodimer.

It carries out the reaction uridine(38/39/40) in tRNA = pseudouridine(38/39/40) in tRNA. Formation of pseudouridine at positions 38, 39 and 40 in the anticodon stem and loop of transfer RNAs. This chain is tRNA pseudouridine synthase A, found in Shewanella baltica (strain OS195).